The sequence spans 300 residues: UDP-N-acetylenolpyruvoylglucosamine reductase (300 aa).

Positions 22 to 190 constitute an FAD-binding PCMH-type domain; sequence RVGGAAEWLA…LSARFRLQPG (169 aa). Residue R169 is part of the active site. Catalysis depends on S220, which acts as the Proton donor. Residue E290 is part of the active site.

This sequence belongs to the MurB family. FAD serves as cofactor.

The protein resides in the cytoplasm. The catalysed reaction is UDP-N-acetyl-alpha-D-muramate + NADP(+) = UDP-N-acetyl-3-O-(1-carboxyvinyl)-alpha-D-glucosamine + NADPH + H(+). It participates in cell wall biogenesis; peptidoglycan biosynthesis. Its function is as follows. Cell wall formation. In Synechococcus sp. (strain CC9605), this protein is UDP-N-acetylenolpyruvoylglucosamine reductase.